The sequence spans 147 residues: Phospholipase A2 SSD1043 (147 aa).

The first 22 residues, 1–22 (MSPKFMFFSIIAVWSCAAVTEA), serve as a signal peptide directing secretion. A propeptide spanning residues 23–28 (LFIQHR) is cleaved from the precursor. Cystine bridges form between cysteine 55–cysteine 71, cysteine 70–cysteine 130, cysteine 77–cysteine 123, cysteine 86–cysteine 116, and cysteine 109–cysteine 121. 2 residues coordinate Ca(2+): glycine 56 and glycine 58. The active site involves histidine 74. Residue aspartate 75 coordinates Ca(2+). Aspartate 124 is an active-site residue.

Ca(2+) serves as cofactor. As to expression, expressed by the venom gland.

It is found in the secreted. The enzyme catalyses a 1,2-diacyl-sn-glycero-3-phosphocholine + H2O = a 1-acyl-sn-glycero-3-phosphocholine + a fatty acid + H(+). In terms of biological role, PLA2 catalyzes the calcium-dependent hydrolysis of the 2-acyl groups in 3-sn-phosphoglycerides. This chain is Phospholipase A2 SSD1043, found in Scolopendra dehaani (Thai centipede).